Here is a 206-residue protein sequence, read N- to C-terminus: Nucleoside triphosphate pyrophosphatase (206 aa).

Residue D76 is the Proton acceptor of the active site.

Belongs to the Maf family. Requires a divalent metal cation as cofactor.

It localises to the cytoplasm. The catalysed reaction is a ribonucleoside 5'-triphosphate + H2O = a ribonucleoside 5'-phosphate + diphosphate + H(+). The enzyme catalyses a 2'-deoxyribonucleoside 5'-triphosphate + H2O = a 2'-deoxyribonucleoside 5'-phosphate + diphosphate + H(+). Its function is as follows. Nucleoside triphosphate pyrophosphatase. May have a dual role in cell division arrest and in preventing the incorporation of modified nucleotides into cellular nucleic acids. The protein is Nucleoside triphosphate pyrophosphatase of Streptomyces avermitilis (strain ATCC 31267 / DSM 46492 / JCM 5070 / NBRC 14893 / NCIMB 12804 / NRRL 8165 / MA-4680).